A 541-amino-acid chain; its full sequence is Nectin 1b (541 aa).

Residues 1 to 21 (MDKQESFFVGHKSHRCSQNRS) form the signal peptide. Residues 22–396 (VSQIHQRTSR…PAELHSSGAA (375 aa)) are Extracellular-facing. N-linked (GlcNAc...) asparagine glycosylation is found at Asn51, Asn105, Asn180, Asn242, Asn326, Asn337, and Asn372. Residues 77–182 (GDTVELKCLF…GNRENMVNLT (106 aa)) enclose the Ig-like V-type domain. A disulfide bridge connects residues Cys84 and Cys165. Ig-like C2-type domains lie at 187–282 (PVTK…VILN) and 287–374 (PEVK…VNVT). Cystine bridges form between Cys212/Cys266 and Cys309/Cys356. Residues 397 to 417 (IGGAVGGVALLVAAIALLVFF) traverse the membrane as a helical segment. Over 418-541 (LRRRQRTFKG…SVISKKEWYV (124 aa)) the chain is Cytoplasmic. The disordered stretch occupies residues 440 to 507 (YSKAGGMPAH…VDEGESRDYD (68 aa)). Positions 479-493 (SGDRDFDGNSEDLKR) are enriched in basic and acidic residues.

The protein belongs to the nectin family. As to quaternary structure, cis- and trans-homodimer. Can form trans-heterodimers. Expressed in the developing eye and nervous system.

Its subcellular location is the cell membrane. The protein localises to the cell junction. It is found in the adherens junction. Functionally, cell adhesion molecule that promotes cell-cell contacts and plays important roles in the development of the nervous system. Acts by forming homophilic or heterophilic trans-dimers. This is Nectin 1b from Danio rerio (Zebrafish).